The primary structure comprises 85 residues: Small ribosomal subunit protein bS16 (85 aa).

The protein belongs to the bacterial ribosomal protein bS16 family.

The polypeptide is Small ribosomal subunit protein bS16 (Metamycoplasma arthritidis (strain 158L3-1) (Mycoplasma arthritidis)).